We begin with the raw amino-acid sequence, 346 residues long: uncharacterized protein (346 aa).

This sequence belongs to the Gfo/Idh/MocA family.

This is an uncharacterized protein from Escherichia coli (strain K12).